A 353-amino-acid polypeptide reads, in one-letter code: Phosphate acyltransferase (353 aa).

This sequence belongs to the PlsX family. Homodimer. Probably interacts with PlsY.

Its subcellular location is the cytoplasm. The catalysed reaction is a fatty acyl-[ACP] + phosphate = an acyl phosphate + holo-[ACP]. It functions in the pathway lipid metabolism; phospholipid metabolism. Catalyzes the reversible formation of acyl-phosphate (acyl-PO(4)) from acyl-[acyl-carrier-protein] (acyl-ACP). This enzyme utilizes acyl-ACP as fatty acyl donor, but not acyl-CoA. This chain is Phosphate acyltransferase, found in Nitrosospira multiformis (strain ATCC 25196 / NCIMB 11849 / C 71).